The sequence spans 147 residues: UPF0306 protein YhbP (147 aa).

Belongs to the UPF0306 family.

This Escherichia coli (strain SMS-3-5 / SECEC) protein is UPF0306 protein YhbP.